The following is a 284-amino-acid chain: 4-hydroxy-3-methylbut-2-enyl diphosphate reductase (284 aa).

C12 is a binding site for [4Fe-4S] cluster. (2E)-4-hydroxy-3-methylbut-2-enyl diphosphate-binding residues include H40 and H76. Dimethylallyl diphosphate contacts are provided by H40 and H76. 2 residues coordinate isopentenyl diphosphate: H40 and H76. Position 98 (C98) interacts with [4Fe-4S] cluster. H126 provides a ligand contact to (2E)-4-hydroxy-3-methylbut-2-enyl diphosphate. H126 is a binding site for dimethylallyl diphosphate. H126 serves as a coordination point for isopentenyl diphosphate. E128 acts as the Proton donor in catalysis. Position 161 (T161) interacts with (2E)-4-hydroxy-3-methylbut-2-enyl diphosphate. C191 lines the [4Fe-4S] cluster pocket. S219, S220, N221, and S263 together coordinate (2E)-4-hydroxy-3-methylbut-2-enyl diphosphate. Residues S219, S220, N221, and S263 each contribute to the dimethylallyl diphosphate site. Isopentenyl diphosphate-binding residues include S219, S220, N221, and S263.

It belongs to the IspH family. It depends on [4Fe-4S] cluster as a cofactor.

The catalysed reaction is isopentenyl diphosphate + 2 oxidized [2Fe-2S]-[ferredoxin] + H2O = (2E)-4-hydroxy-3-methylbut-2-enyl diphosphate + 2 reduced [2Fe-2S]-[ferredoxin] + 2 H(+). It carries out the reaction dimethylallyl diphosphate + 2 oxidized [2Fe-2S]-[ferredoxin] + H2O = (2E)-4-hydroxy-3-methylbut-2-enyl diphosphate + 2 reduced [2Fe-2S]-[ferredoxin] + 2 H(+). Its pathway is isoprenoid biosynthesis; dimethylallyl diphosphate biosynthesis; dimethylallyl diphosphate from (2E)-4-hydroxy-3-methylbutenyl diphosphate: step 1/1. It functions in the pathway isoprenoid biosynthesis; isopentenyl diphosphate biosynthesis via DXP pathway; isopentenyl diphosphate from 1-deoxy-D-xylulose 5-phosphate: step 6/6. Catalyzes the conversion of 1-hydroxy-2-methyl-2-(E)-butenyl 4-diphosphate (HMBPP) into a mixture of isopentenyl diphosphate (IPP) and dimethylallyl diphosphate (DMAPP). Acts in the terminal step of the DOXP/MEP pathway for isoprenoid precursor biosynthesis. This chain is 4-hydroxy-3-methylbut-2-enyl diphosphate reductase, found in Petrotoga mobilis (strain DSM 10674 / SJ95).